A 358-amino-acid polypeptide reads, in one-letter code: Molybdenum import ATP-binding protein ModC (358 aa).

One can recognise an ABC transporter domain in the interval 2-234 (NDDISASFFS…PDLPLAHLEE (233 aa)). Residue 34-41 (GRSGSGKT) participates in ATP binding. One can recognise a Mop domain in the interval 293–358 (LSSISNCIPV…AQVKSVALID (66 aa)).

Belongs to the ABC transporter superfamily. Molybdate importer (TC 3.A.1.8) family. The complex is composed of two ATP-binding proteins (ModC), two transmembrane proteins (ModB) and a solute-binding protein (ModA).

The protein resides in the cell inner membrane. It carries out the reaction molybdate(out) + ATP + H2O = molybdate(in) + ADP + phosphate + H(+). Functionally, part of the ABC transporter complex ModABC involved in molybdenum import. Responsible for energy coupling to the transport system. This chain is Molybdenum import ATP-binding protein ModC, found in Hahella chejuensis (strain KCTC 2396).